The following is a 186-amino-acid chain: Large ribosomal subunit protein uL5 (186 aa).

Belongs to the universal ribosomal protein uL5 family. As to quaternary structure, part of the 50S ribosomal subunit; part of the 5S rRNA/L5/L18/L25 subcomplex. Contacts the 5S rRNA and the P site tRNA. Forms a bridge to the 30S subunit in the 70S ribosome.

Functionally, this is one of the proteins that bind and probably mediate the attachment of the 5S RNA into the large ribosomal subunit, where it forms part of the central protuberance. In the 70S ribosome it contacts protein S13 of the 30S subunit (bridge B1b), connecting the 2 subunits; this bridge is implicated in subunit movement. Contacts the P site tRNA; the 5S rRNA and some of its associated proteins might help stabilize positioning of ribosome-bound tRNAs. The protein is Large ribosomal subunit protein uL5 of Cereibacter sphaeroides (strain ATCC 17023 / DSM 158 / JCM 6121 / CCUG 31486 / LMG 2827 / NBRC 12203 / NCIMB 8253 / ATH 2.4.1.) (Rhodobacter sphaeroides).